The following is a 133-amino-acid chain: Small ribosomal subunit protein uS8 (133 aa).

The protein belongs to the universal ribosomal protein uS8 family. In terms of assembly, part of the 30S ribosomal subunit. Contacts proteins S5 and S12.

Its function is as follows. One of the primary rRNA binding proteins, it binds directly to 16S rRNA central domain where it helps coordinate assembly of the platform of the 30S subunit. This is Small ribosomal subunit protein uS8 from Microcystis aeruginosa (strain NIES-843 / IAM M-2473).